Reading from the N-terminus, the 493-residue chain is Rop guanine nucleotide exchange factor 10 (493 aa).

Disordered regions lie at residues 1 to 45 and 400 to 423; these read MFDG…RSDM and GEAE…VVAA. The span at 17–27 shows a compositional bias: basic and acidic residues; it reads DGMHTPEHELA. The 367-residue stretch at 35-401 folds into the PRONE domain; sequence RRGKQNRRSD…RLVQRQLMGE (367 aa).

Functionally, guanine-nucleotide exchange factor (GEF) that acts as an activator of Rop (Rho of plants) GTPases by promoting the exchange of GDP for GTP. The polypeptide is Rop guanine nucleotide exchange factor 10 (ROPGEF10) (Arabidopsis thaliana (Mouse-ear cress)).